The chain runs to 183 residues: NEDD8-conjugating enzyme Ubc12 (183 aa).

An N-acetylmethionine modification is found at M1. Positions 1–28 (MIKLFSLKQQKKEEESAGGTKGSSKKAS) are disordered. Residues 29–173 (AAQLRIQKDI…VQRSMRGGYI (145 aa)) enclose the UBC core domain. The Glycyl thioester intermediate role is filled by C111.

The protein belongs to the ubiquitin-conjugating enzyme family. UBC12 subfamily. In terms of processing, the acetylation of Met-1 increases affinity for DCUN1D1 by about 2 orders of magnitude and is crucial for NEDD8 transfer to cullins.

It carries out the reaction [E1 NEDD8-activating enzyme]-S-[NEDD8 protein]-yl-L-cysteine + [E2 NEDD8-conjugating enzyme]-L-cysteine = [E1 NEDD8-activating enzyme]-L-cysteine + [E2 NEDD8-conjugating enzyme]-S-[NEDD8-protein]-yl-L-cysteine.. It participates in protein modification; protein neddylation. Accepts the ubiquitin-like protein NEDD8 from the UBA3-NAE1 E1 complex and catalyzes its covalent attachment to other proteins. The specific interaction with the E3 ubiquitin ligase rbx1, but not rbx2, suggests that the rbx1-ube2m complex neddylates specific target proteins, such as cul1, cul2, cul3 and cul4. Involved in cell proliferation. The chain is NEDD8-conjugating enzyme Ubc12 (ube2m) from Xenopus tropicalis (Western clawed frog).